Consider the following 345-residue polypeptide: Papain (345 aa).

Positions 1–18 (MAMIPSISKLLFVAICLF) are cleaved as a signal peptide. The propeptide at 19-133 (VYMGLSFGDF…EEVLNDGDVN (115 aa)) is activation peptide. 3 cysteine pairs are disulfide-bonded: Cys155/Cys196, Cys189/Cys228, and Cys286/Cys333. The active site involves Cys158. E64 is bound at residue Cys158. Cys158 provides a ligand contact to leupeptin. Active-site residues include His292 and Asn308.

It belongs to the peptidase C1 family.

It carries out the reaction Hydrolysis of proteins with broad specificity for peptide bonds, but preference for an amino acid bearing a large hydrophobic side chain at the P2 position. Does not accept Val in P1'.. With respect to regulation, repressed by the active-site-directed cysteine protease inhibitor E64 (L-trans-epoxysuccinyl-leucylamide-(4-guanido)-butane) produced by Aspergillus japonicus. Inhibited by the inhibitor of cysteine proteases from Trypanosoma brucei (TbICP, rhodesain) and Colocasia esculenta cv. Kaohsiung no. 1 (CeCPI, tarocystatin). Repressed by leupeptin, a peptidic cysteine, serine and threonine protease inhibitor. In terms of biological role, cysteine proteinase with a high level of diversity in substrate specificity, an amino acid bearing a large hydrophobic side chain at the P2 position is preferred. In Carica papaya (Papaya), this protein is Papain.